The chain runs to 325 residues: Elongation factor P--(R)-beta-lysine ligase (325 aa).

76 to 78 (SPE) lines the substrate pocket. ATP contacts are provided by residues 100–102 (RNE) and N109. Y118 is a substrate binding site. 244–245 (EL) provides a ligand contact to ATP. E251 contributes to the substrate binding site. G300 provides a ligand contact to ATP.

It belongs to the class-II aminoacyl-tRNA synthetase family. EpmA subfamily. In terms of assembly, homodimer.

It carries out the reaction D-beta-lysine + L-lysyl-[protein] + ATP = N(6)-((3R)-3,6-diaminohexanoyl)-L-lysyl-[protein] + AMP + diphosphate + H(+). With EpmB is involved in the beta-lysylation step of the post-translational modification of translation elongation factor P (EF-P) on 'Lys-34'. Catalyzes the ATP-dependent activation of (R)-beta-lysine produced by EpmB, forming a lysyl-adenylate, from which the beta-lysyl moiety is then transferred to the epsilon-amino group of EF-P 'Lys-34'. This Salmonella dublin (strain CT_02021853) protein is Elongation factor P--(R)-beta-lysine ligase.